The primary structure comprises 147 residues: Ribosome-binding factor A (147 aa).

Residues 127-147 are disordered; the sequence is AAEARHAGEPDPYKTDRDDAE.

It belongs to the RbfA family. Monomer. Binds 30S ribosomal subunits, but not 50S ribosomal subunits or 70S ribosomes.

The protein localises to the cytoplasm. Its function is as follows. One of several proteins that assist in the late maturation steps of the functional core of the 30S ribosomal subunit. Associates with free 30S ribosomal subunits (but not with 30S subunits that are part of 70S ribosomes or polysomes). Required for efficient processing of 16S rRNA. May interact with the 5'-terminal helix region of 16S rRNA. This chain is Ribosome-binding factor A, found in Nocardia farcinica (strain IFM 10152).